We begin with the raw amino-acid sequence, 480 residues long: Probable ATP-dependent RNA helicase DDX49 (480 aa).

A Q motif motif is present at residues 2–30; the sequence is AGFAEIGLSSWLVEQCRQLGLKQPTPVQL. In terms of domain architecture, Helicase ATP-binding spans 33–207; the sequence is IPAILEGRDC…GLATNEPFFW (175 aa). Residue 46–53 participates in ATP binding; that stretch reads AKTGSGKT. The DEAD box signature appears at 152 to 155; sequence DEAD. A Helicase C-terminal domain is found at 218–382; the sequence is QLDQRYLLVP…ELVVEEAEVL (165 aa). The segment at 438–480 is disordered; sequence QQNRRFKEKVGQTLRRQKAGSTVRRSRPPRSRPQEPAQAEAQD.

The protein belongs to the DEAD box helicase family. DDX49/DBP8 subfamily.

It localises to the nucleus. The protein localises to the nucleolus. It catalyses the reaction ATP + H2O = ADP + phosphate + H(+). Its function is as follows. ATP-dependent RNA helicase that plays a role in various aspects of RNA metabolism including the regulation of mRNA export and the levels of pre-ribosomal RNA. Regulates the stability and synthesis of pre-ribosomal RNA and thereby regulates cell proliferation. Also possesses antiviral activity by recognizing gammaherpesvirus transcripts in the context of lytic reactivation. The chain is Probable ATP-dependent RNA helicase DDX49 (Ddx49) from Mus musculus (Mouse).